Here is a 92-residue protein sequence, read N- to C-terminus: Small ribosomal subunit protein uS19 (92 aa).

It belongs to the universal ribosomal protein uS19 family.

Protein S19 forms a complex with S13 that binds strongly to the 16S ribosomal RNA. This Aliivibrio fischeri (strain ATCC 700601 / ES114) (Vibrio fischeri) protein is Small ribosomal subunit protein uS19.